The chain runs to 953 residues: MSDYKQTLNLPATSFAMKGNMANREPNMLKYWAAKDLYGKIREAKKGKKSFILHDGPPYANGNIHLGHAVNKILKDIIVKSKNLSDFNSPFVPGWDCHGLPIELMVEKKVGKPGHKISASDFRQKCREYAAKQVNGQREDFKRLGIFADWEKPYLTMDFGTEANIIRSLGKIAENGHLHQGFKPVHWCTDCGSSLAEAEVEYKDKQSPAIDVKFTISDESVADKFSHPEGHKGEGEIGAVIWTTTPWTLPANRAIAVNAEVEYTLVQCEQAGEKQRLIIASDLVTTCMDRFGFDKYHALGFCKGSELELVQCQHPFYDFTVPVVLGEHVTTDSGTGCVHTAPGHGVEDFVVGKLYDLEVANPVGANGVYLEDTPLLAGQHVFKANASVVELLKEKGALVHHHALDHSYPHCWRHKTPLIFRATPQWFISMDKKGLRQDSLNEIEKTQWIPDWGQRRIESMVEGRPDWCISRQRTWGVPMALFIHQDSGALHPRSIELIEEVALLVEKSGIQAWFDLEAIELIGDDAKEYIKVPDTLDVWFDSGTTHESVIKARDEFDGIADLYLEGSDQHRGWFMSSMISSVAMNGAAPYKQVLTHGFVVDAKGHKMSKSLGNVITPKEITNNLGADILRLWTASVNYTQEITAGDEIFKRQADAYRRIRNTSRFLLSNLTGFEPANHMVAVEDMVALDRWVIDKAARLQEEIINAYDEYEFHVVVHKLMNFCTNELGGFYLDIIKDRQYTAKSDSNARRSCQTAMYLIAEAMTAWMAPILSFTAQEIWEALPLPVSGERDEFVFTGVWFDGLMKQESKQDESTESSDELGNEYWTELLTVRGEVNRALEQARKDKSVGKALEAQVTLFATADLAAKLAKLGDELRFVLITSKATIETVTSAPENALETEVEGLWLTVAPAEGIKCERCWHVTTDIGESEKHPTLCGRCITNIDGEGETRQFA.

The 'HIGH' region motif lies at 58 to 68 (PYANGNIHLGH). Glu565 provides a ligand contact to L-isoleucyl-5'-AMP. A 'KMSKS' region motif is present at residues 606-610 (KMSKS). Lys609 is an ATP binding site. The Zn(2+) site is built by Cys916, Cys919, Cys936, and Cys939.

The protein belongs to the class-I aminoacyl-tRNA synthetase family. IleS type 1 subfamily. In terms of assembly, monomer. Requires Zn(2+) as cofactor.

Its subcellular location is the cytoplasm. It carries out the reaction tRNA(Ile) + L-isoleucine + ATP = L-isoleucyl-tRNA(Ile) + AMP + diphosphate. Catalyzes the attachment of isoleucine to tRNA(Ile). As IleRS can inadvertently accommodate and process structurally similar amino acids such as valine, to avoid such errors it has two additional distinct tRNA(Ile)-dependent editing activities. One activity is designated as 'pretransfer' editing and involves the hydrolysis of activated Val-AMP. The other activity is designated 'posttransfer' editing and involves deacylation of mischarged Val-tRNA(Ile). This is Isoleucine--tRNA ligase from Colwellia psychrerythraea (strain 34H / ATCC BAA-681) (Vibrio psychroerythus).